We begin with the raw amino-acid sequence, 442 residues long: Alpha-1,6-mannosyl-glycoprotein 2-beta-N-acetylglucosaminyltransferase (442 aa).

The Cytoplasmic portion of the chain corresponds to 1–9; that stretch reads MRFRIYKRK. Residues 10-29 traverse the membrane as a helical; Signal-anchor for type II membrane protein segment; it reads VLILTLVVAACGFVLWSSNG. Over 30–442 the chain is Lumenal; it reads RQRKNDALAP…ELCKSYRRLQ (413 aa). 2 N-linked (GlcNAc...) asparagine glycosylation sites follow: Asn-64 and Asn-81. Residues 118–122 and Asp-149 contribute to the substrate site; that span reads QVHNR. Residues Cys-191 and Cys-205 are joined by a disulfide bond. Substrate is bound at residue 224–228; it reads QTKHH. Asp-256 is a binding site for Mn(2+). Cys-278 and Cys-281 are disulfide-bonded. Arg-293 is a substrate binding site. 3 cysteine pairs are disulfide-bonded: Cys-329/Cys-352, Cys-334/Cys-435, and Cys-373/Cys-381. A Mn(2+)-binding site is contributed by His-369.

Belongs to the glycosyltransferase 16 (GT16) protein family. In terms of assembly, homodimer. Requires Mn(2+) as cofactor. In terms of tissue distribution, detected in liver (at protein level). Detected in liver, brain, thymus and spleen.

It is found in the golgi apparatus membrane. The enzyme catalyses an N(4)-{beta-D-GlcNAc-(1-&gt;2)-alpha-D-Man-(1-&gt;3)-[alpha-D-Man-(1-&gt;6)]-beta-D-Man-(1-&gt;4)-beta-D-GlcNAc-(1-&gt;4)-beta-D-GlcNAc}-L-asparaginyl-[protein] + UDP-N-acetyl-alpha-D-glucosamine = N(4)-{beta-D-GlcNAc-(1-&gt;2)-alpha-D-Man-(1-&gt;3)-[beta-D-GlcNAc-(1-&gt;2)-alpha-D-Man-(1-&gt;6)]-beta-D-Man-(1-&gt;4)-beta-D-GlcNAc-(1-&gt;4)-beta-D-GlcNAc}-L-asparaginyl-[protein] + UDP + H(+). It functions in the pathway protein modification; protein glycosylation. In terms of biological role, plays an essential role in protein N-glycosylation. Catalyzes the transfer of N-acetylglucosamine (GlcNAc) onto the free terminal mannose moiety in the core structure of the nascent N-linked glycan chain, giving rise to the second branch in complex glycans. The polypeptide is Alpha-1,6-mannosyl-glycoprotein 2-beta-N-acetylglucosaminyltransferase (Mgat2) (Rattus norvegicus (Rat)).